Here is a 101-residue protein sequence, read N- to C-terminus: NAD(P)H-quinone oxidoreductase subunit 4L, chloroplastic (101 aa).

3 consecutive transmembrane segments (helical) span residues 2–22 (MLEH…YGLI), 32–52 (MCLE…SDLF), and 61–81 (IFSI…LAII).

Belongs to the complex I subunit 4L family. As to quaternary structure, NDH is composed of at least 16 different subunits, 5 of which are encoded in the nucleus.

The protein resides in the plastid. The protein localises to the chloroplast thylakoid membrane. The catalysed reaction is a plastoquinone + NADH + (n+1) H(+)(in) = a plastoquinol + NAD(+) + n H(+)(out). The enzyme catalyses a plastoquinone + NADPH + (n+1) H(+)(in) = a plastoquinol + NADP(+) + n H(+)(out). Its function is as follows. NDH shuttles electrons from NAD(P)H:plastoquinone, via FMN and iron-sulfur (Fe-S) centers, to quinones in the photosynthetic chain and possibly in a chloroplast respiratory chain. The immediate electron acceptor for the enzyme in this species is believed to be plastoquinone. Couples the redox reaction to proton translocation, and thus conserves the redox energy in a proton gradient. The protein is NAD(P)H-quinone oxidoreductase subunit 4L, chloroplastic of Ranunculus macranthus (Large buttercup).